Here is a 170-residue protein sequence, read N- to C-terminus: Small ribosomal subunit protein uS5 (170 aa).

Residues 12 to 75 (LSELLVSVRR…NAAKKSMIRV (64 aa)) enclose the S5 DRBM domain.

Belongs to the universal ribosomal protein uS5 family. As to quaternary structure, part of the 30S ribosomal subunit. Contacts proteins S4 and S8.

With S4 and S12 plays an important role in translational accuracy. In terms of biological role, located at the back of the 30S subunit body where it stabilizes the conformation of the head with respect to the body. The sequence is that of Small ribosomal subunit protein uS5 from Wolbachia pipientis wMel.